The following is a 1026-amino-acid chain: Multidrug resistance protein MdtC (1026 aa).

Residues 1–6 (MRFFAL) lie on the Cytoplasmic side of the membrane. Residues 7–29 (FIYRPVATILIAAAITLCGILGF) form a helical membrane-spanning segment. The Periplasmic segment spans residues 30-335 (RLLPVAPLPQ…TIRASLQEVE (306 aa)). The chain crosses the membrane as a helical span at residues 336–353 (ETLAISVALVILVVFLFL). Topologically, residues 354–359 (RSGRAT) are cytoplasmic. Residues 360 to 379 (LIPAVAVPVSLIGTFAAMYL) form a helical membrane-spanning segment. At 380-388 (CGFSLNNLS) the chain is on the periplasmic side. The chain crosses the membrane as a helical span at residues 389–411 (LMALTIATGFVVDDAIVVLENIA). Residues 412 to 430 (RHLEARMKPLQAALQGTRE) lie on the Cytoplasmic side of the membrane. The helical transmembrane segment at 431 to 453 (VGFTVISMSLSLVAVFLPLLLMG) threads the bilayer. Residues 454 to 467 (GLPGRLLREFAVTL) lie on the Periplasmic side of the membrane. A helical transmembrane segment spans residues 468 to 490 (SVAIGISLVVSLTLTPMMCGWML). Over 491–852 (KSSKPRTQPR…QVFQQTMNSQ (362 aa)) the chain is Cytoplasmic. The chain crosses the membrane as a helical span at residues 853-875 (LILIVAAIATVYIVLGILYESYV). Topologically, residues 876–894 (HPLTILSTLPSAGVGALLA) are periplasmic. Residues 895–917 (LELFNAPFSLIALIGIMLLIGIV) traverse the membrane as a helical segment. Residues 918 to 947 (KKNAIMMVDFALEAQRSGGLTPEQAIFQAC) lie on the Cytoplasmic side of the membrane. A helical transmembrane segment spans residues 948–970 (LLRFRPIMMTTLAALFGALPLVL). Over 971-984 (SGGDGSELRQPLGI) the chain is Periplasmic. A helical transmembrane segment spans residues 985 to 1007 (TIVGGLVMSQLLTLYTTPVVYLF). Topologically, residues 1008-1026 (FDRLRLRFSRKNSKPVVEI) are cytoplasmic.

This sequence belongs to the resistance-nodulation-cell division (RND) (TC 2.A.6) family. MdtC subfamily. Part of a tripartite efflux system composed of MdtA, MdtB and MdtC. MdtC forms a heteromultimer with MdtB.

The protein resides in the cell inner membrane. The chain is Multidrug resistance protein MdtC from Salmonella typhi.